Reading from the N-terminus, the 535-residue chain is MKTKFIFITGGVVSSIGKGLAAASLGALLESRGLRVTMQKLDPYINVDPGTMSPFQHGEVFVTDDGAETDLDLGHYERYTSARLSKKSNFTTGQVYFSVIDKERRGDYLGGTVQVIPHITDEIKSKIIENAKGADVAIVEVGGTVGDIESLPFLEAIRQFRFDRGAGNTLYVHVTLVPYIRTAGEMKTKPTQHSVMELRKIGIQPDILLCRCDRELPQDMKKKISLFCNVEESCVIPSVDSEHIYAVPLALNKERLDEQVVEKLNIWTKQPDLTPWQDVVETLRHPSHGEVRIAIVGKYVNLTESYKSLAEALTHGGIANDCRVYLKYVDAEKIEENGVEGWLDDVDGVLVPGGFGERGTEGKVLAIEYARTRQIPFFGICLGMQMAAIEFARNVCGLAKACSTEFKNDCKEPVIHLMEEQKSVNKKGGTMRLGACPCTVTKGTKAFDAYNEADISERHRHRYEFNNTYRELMTTKGLVLSGINQQKDLVEIIELPDHPWFLACQFHPEFKSKPLVPHPLFRAFIGASLTHRNQR.

Residues 1-266 are amidoligase domain; it reads MKTKFIFITG…DEQVVEKLNI (266 aa). CTP is bound at residue Ser14. Residue Ser14 participates in UTP binding. Residues 15–20 and Asp72 contribute to the ATP site; that span reads SIGKGL. 2 residues coordinate Mg(2+): Asp72 and Glu140. CTP-binding positions include 147–149, 187–192, and Lys223; these read DIE and KTKPTQ. Residues 187–192 and Lys223 contribute to the UTP site; that span reads KTKPTQ. Residues 292–534 enclose the Glutamine amidotransferase type-1 domain; that stretch reads RIAIVGKYVN…IGASLTHRNQ (243 aa). An L-glutamine-binding site is contributed by Gly354. The active-site Nucleophile; for glutamine hydrolysis is Cys381. Residues 382 to 385, Glu405, and Arg462 each bind L-glutamine; that span reads LGMQ. Active-site residues include His507 and Glu509.

This sequence belongs to the CTP synthase family. Homotetramer.

The catalysed reaction is UTP + L-glutamine + ATP + H2O = CTP + L-glutamate + ADP + phosphate + 2 H(+). It catalyses the reaction L-glutamine + H2O = L-glutamate + NH4(+). It carries out the reaction UTP + NH4(+) + ATP = CTP + ADP + phosphate + 2 H(+). It functions in the pathway pyrimidine metabolism; CTP biosynthesis via de novo pathway; CTP from UDP: step 2/2. Its activity is regulated as follows. Allosterically activated by GTP, when glutamine is the substrate; GTP has no effect on the reaction when ammonia is the substrate. The allosteric effector GTP functions by stabilizing the protein conformation that binds the tetrahedral intermediate(s) formed during glutamine hydrolysis. Inhibited by the product CTP, via allosteric rather than competitive inhibition. Catalyzes the ATP-dependent amination of UTP to CTP with either L-glutamine or ammonia as the source of nitrogen. Regulates intracellular CTP levels through interactions with the four ribonucleotide triphosphates. The polypeptide is CTP synthase (Trichlorobacter lovleyi (strain ATCC BAA-1151 / DSM 17278 / SZ) (Geobacter lovleyi)).